Here is a 735-residue protein sequence, read N- to C-terminus: E3 ubiquitin-protein ligase SH3RF2 (735 aa).

An RING-type zinc finger spans residues 12 to 53 (CPVCFEKLDVTAKVLPCQHTFCKPCLQRIFKAHKELRCPECR). 2 consecutive SH3 domains span residues 125–184 (DGVP…VIKQ) and 187–252 (QPPP…PNLS). Disordered stretches follow at residues 260–301 (SKGH…GSGQ) and 335–373 (TSPS…STAM). Polar residues predominate over residues 273-289 (LMSSPSRGKATNTSTLR). Residues 373 to 466 (MVSVPSSQQH…RHPTVCTTWA (94 aa)) form an interaction with PAK4 region. The SH3 3 domain occupies 383–444 (LSTNMFVALH…PSDYVIPVFS (62 aa)). Disordered stretches follow at residues 472 to 534 (VSSQ…PVQS), 612 to 637 (ETPI…KPEN), and 649 to 735 (VRFQ…FPSK). Positions 523–534 (RKNGSLQRPVQS) are enriched in polar residues. Residues 617-627 (SEPPPKPPASA) are compositionally biased toward pro residues. The segment at 647–652 (KTVRFQ) is interaction with PPP1CA. The residue at position 655 (Ser-655) is a Phosphoserine. The segment covering 715–735 (FSKTTPPVSTASVSQTLFPSK) has biased composition (polar residues).

The protein belongs to the SH3RF family. As to quaternary structure, interacts with FASLG and PPP1CA. Interacts with PAK4 and TNFRSF1A. Interacts with DLK1, MAP3K10, MAPK8IP1/JIP1, MAPK8IP2/JIP2 and MAPK8IP3/JIP3. Interacts with RAC1 (both active GTP- or inactive GDP-bound forms). Post-translationally, autoubiquitinated.

Its subcellular location is the nucleus. The catalysed reaction is S-ubiquitinyl-[E2 ubiquitin-conjugating enzyme]-L-cysteine + [acceptor protein]-L-lysine = [E2 ubiquitin-conjugating enzyme]-L-cysteine + N(6)-ubiquitinyl-[acceptor protein]-L-lysine.. It functions in the pathway protein modification; protein ubiquitination. Functionally, has E3 ubiquitin-protein ligase activity. Acts as an anti-apoptotic regulator of the JNK pathway by ubiquitinating and promoting the degradation of SH3RF1, a scaffold protein that is required for pro-apoptotic JNK activation. Facilitates TNF-alpha-mediated recruitment of adapter proteins TRADD and RIPK1 to TNFRSF1A and regulates PAK4 protein stability via inhibition of its ubiquitin-mediated proteasomal degradation. Inhibits PPP1CA phosphatase activity. In Rattus norvegicus (Rat), this protein is E3 ubiquitin-protein ligase SH3RF2 (Sh3rf2).